The chain runs to 87 residues: Small ribosomal subunit protein bS20 (87 aa).

This sequence belongs to the bacterial ribosomal protein bS20 family.

Binds directly to 16S ribosomal RNA. In Beijerinckia indica subsp. indica (strain ATCC 9039 / DSM 1715 / NCIMB 8712), this protein is Small ribosomal subunit protein bS20.